We begin with the raw amino-acid sequence, 497 residues long: MTDLPQAEGGCGAGNERLAAQAAAAGNAELMARFKADYPVGPHDKPQTMCPAFGALRVGLRMRRVATVLCGSACCVYGLSFISHFYGARRSVGYVPFDSETLVTGKLFEDVRASVHDLADPARYDAIVVINLCVPTASGVPLQLLPNEINGVRVVGIDVPGFGVPTHAEAKDVLSGAMLAYARQEVMAGPVPAPISGRSDRPTVTLLGEMFPADPMVIGAMLAPMGLAVGPTVPMRDWRELYAALDSKVVAAIHPFYTAAIRQFEAAGRAIVGSAPVGHDGTMEWLANIGRAYDVSPDKIAAAQNAFGPAIRGAIAGAPIKGRITVSGYEGSELLVARLLIESGAEVPYVGTAAPRTPWSAWDKDWLESRGVVVKYRASLEDDCAAMEGFEPDLAIGTTPLVQKAKALGIPALYFTNLISARPLMGPAGAGSLAQVMNAAMGNRERMGKMKAFFEGVGEGDTAGIWQDTPKLYPDFREQQRKKMEKAAKLAKAEEMI.

Helical transmembrane passes span valine 65–isoleucine 82, alanine 126–leucine 142, and methionine 216–valine 233.

Belongs to the BchN/ChlN family. As to quaternary structure, chlorophyllide reductase is composed of three subunits; BchX, BchY and BchZ. Forms a heterodimer of one BchY and one BchZ subunit.

The protein resides in the cell membrane. It catalyses the reaction 3-deacetyl-3-vinylbacteriochlorophyllide a + 2 oxidized [2Fe-2S]-[ferredoxin] + ADP + phosphate = chlorophyllide a + 2 reduced [2Fe-2S]-[ferredoxin] + ATP + H2O + H(+). The enzyme catalyses bacteriochlorophyllide a + 2 oxidized [2Fe-2S]-[ferredoxin] + ADP + phosphate = 3-acetyl-3-devinylchlorophyllide a + 2 reduced [2Fe-2S]-[ferredoxin] + ATP + H2O + H(+). It carries out the reaction 3-deacetyl-3-(1-hydroxyethyl)bacteriochlorophyllide a + 2 oxidized [2Fe-2S]-[ferredoxin] + ADP + phosphate = 3-devinyl-3-(1-hydroxyethyl)chlorophyllide a + 2 reduced [2Fe-2S]-[ferredoxin] + ATP + H2O + H(+). Its pathway is porphyrin-containing compound metabolism; bacteriochlorophyll biosynthesis (light-independent). In terms of biological role, converts chlorophylls (Chl) into bacteriochlorophylls (BChl) by reducing ring B of the tetrapyrrole. The polypeptide is Chlorophyllide reductase 52.5 kDa chain (bchY) (Rhodobacter capsulatus (strain ATCC BAA-309 / NBRC 16581 / SB1003)).